The primary structure comprises 236 residues: Phosphoribosylformylglycinamidine synthase subunit PurQ (236 aa).

One can recognise a Glutamine amidotransferase type-1 domain in the interval 3–234; sequence FGVIVFPGSN…VDWWERGERL (232 aa). The active-site Nucleophile is the Cys86. Residues His203 and Glu205 contribute to the active site.

In terms of assembly, part of the FGAM synthase complex composed of 1 PurL, 1 PurQ and 2 PurS subunits.

The protein localises to the cytoplasm. The enzyme catalyses N(2)-formyl-N(1)-(5-phospho-beta-D-ribosyl)glycinamide + L-glutamine + ATP + H2O = 2-formamido-N(1)-(5-O-phospho-beta-D-ribosyl)acetamidine + L-glutamate + ADP + phosphate + H(+). The catalysed reaction is L-glutamine + H2O = L-glutamate + NH4(+). Its pathway is purine metabolism; IMP biosynthesis via de novo pathway; 5-amino-1-(5-phospho-D-ribosyl)imidazole from N(2)-formyl-N(1)-(5-phospho-D-ribosyl)glycinamide: step 1/2. Functionally, part of the phosphoribosylformylglycinamidine synthase complex involved in the purines biosynthetic pathway. Catalyzes the ATP-dependent conversion of formylglycinamide ribonucleotide (FGAR) and glutamine to yield formylglycinamidine ribonucleotide (FGAM) and glutamate. The FGAM synthase complex is composed of three subunits. PurQ produces an ammonia molecule by converting glutamine to glutamate. PurL transfers the ammonia molecule to FGAR to form FGAM in an ATP-dependent manner. PurS interacts with PurQ and PurL and is thought to assist in the transfer of the ammonia molecule from PurQ to PurL. This is Phosphoribosylformylglycinamidine synthase subunit PurQ from Moorella thermoacetica (strain ATCC 39073 / JCM 9320).